A 194-amino-acid chain; its full sequence is HTH-type transcriptional regulator BetI (194 aa).

Residues 8–68 (PLRRRELIDA…ATMRHLLREL (61 aa)) enclose the HTH tetR-type domain. Residues 31-50 (TVAQIAHEAGVSPALAHHYF) constitute a DNA-binding region (H-T-H motif).

The protein operates within amine and polyamine biosynthesis; betaine biosynthesis via choline pathway [regulation]. Its function is as follows. Repressor involved in the biosynthesis of the osmoprotectant glycine betaine. It represses transcription of the choline transporter BetT and the genes of BetAB involved in the synthesis of glycine betaine. The sequence is that of HTH-type transcriptional regulator BetI from Brucella anthropi (strain ATCC 49188 / DSM 6882 / CCUG 24695 / JCM 21032 / LMG 3331 / NBRC 15819 / NCTC 12168 / Alc 37) (Ochrobactrum anthropi).